The primary structure comprises 467 residues: Asparagine--tRNA ligase (467 aa).

This sequence belongs to the class-II aminoacyl-tRNA synthetase family. In terms of assembly, homodimer.

The protein localises to the cytoplasm. The catalysed reaction is tRNA(Asn) + L-asparagine + ATP = L-asparaginyl-tRNA(Asn) + AMP + diphosphate + H(+). This chain is Asparagine--tRNA ligase, found in Actinobacillus pleuropneumoniae serotype 5b (strain L20).